Consider the following 242-residue polypeptide: Coiled-coil domain-containing protein 107 (242 aa).

Positions 1-24 (MEGAGPVLSILGLLLVSAPFGVLG) are cleaved as a signal peptide. The disordered stretch occupies residues 27 to 62 (PSADLGAHPERGSQVSPGTTEPRRQPPPKDQRERAR). Residues 47 to 62 (EPRRQPPPKDQRERAR) are compositionally biased toward basic and acidic residues. Residues 65-85 (SLSLGALYTAAVVAFVLFKCL) form a helical membrane-spanning segment. Positions 97–132 (EKNKKKSSQSEQQLVQLTQQLAQTEQHLNHLMTQLD) form a coiled coil. Residues 186-210 (KEDQEAGNSQAWEEPITWSPETRNL) are disordered.

It localises to the membrane. The protein is Coiled-coil domain-containing protein 107 (Ccdc107) of Mus musculus (Mouse).